The following is a 308-amino-acid chain: Cytochrome b (308 aa).

The next 4 helical transmembrane spans lie at 1–21 (FGLLLGICLIVQIVTGLLLAA), 45–66 (WLIRNLHANGASFFFICIYLHI), 81–101 (WNIGVILLLTLMATAFVGYVL), and 146–166 (FFALHFLLPFVIAGLTLVHLT). Residues His-51 and His-65 each coordinate heme b. The heme b site is built by His-150 and His-164. A ubiquinone is bound at residue His-169. The next 3 helical transmembrane spans lie at 194 to 214 (TKDMLGFALMLIPLITLALFS), 256 to 276 (LGGVLALAASVLVLFLIPLLH), and 288 to 308 (LSQILFWTLVANLLVLTWVGS).

The protein belongs to the cytochrome b family. As to quaternary structure, the cytochrome bc1 complex contains 11 subunits: 3 respiratory subunits (MT-CYB, CYC1 and UQCRFS1), 2 core proteins (UQCRC1 and UQCRC2) and 6 low-molecular weight proteins (UQCRH/QCR6, UQCRB/QCR7, UQCRQ/QCR8, UQCR10/QCR9, UQCR11/QCR10 and a cleavage product of UQCRFS1). This cytochrome bc1 complex then forms a dimer. It depends on heme b as a cofactor.

The protein localises to the mitochondrion inner membrane. Functionally, component of the ubiquinol-cytochrome c reductase complex (complex III or cytochrome b-c1 complex) that is part of the mitochondrial respiratory chain. The b-c1 complex mediates electron transfer from ubiquinol to cytochrome c. Contributes to the generation of a proton gradient across the mitochondrial membrane that is then used for ATP synthesis. This is Cytochrome b (MT-CYB) from Pomatostomus temporalis (Grey-crowned babbler).